Here is a 71-residue protein sequence, read N- to C-terminus: MAFLKKSLFLVLFLALVPLSICEAEKREEENEEKQEDDDESEKKRGVVTDLLNTAGGLLGNLVGSLSGGER.

An N-terminal signal peptide occupies residues 1–22; sequence MAFLKKSLFLVLFLALVPLSIC. Positions 23 to 42 are excised as a propeptide; that stretch reads EAEKREEENEEKQEDDDESE. The segment at 25-45 is disordered; sequence EKREEENEEKQEDDDESEKKR. A compositionally biased stretch (acidic residues) spans 30-40; the sequence is ENEEKQEDDDE. Glycine amide is present on Gly68. Residues 70–71 constitute a propeptide that is removed on maturation; it reads ER.

Belongs to the frog skin active peptide (FSAP) family. Plasticin subfamily. As to expression, expressed by the skin glands.

It is found in the secreted. Its subcellular location is the target cell membrane. Neutral peptide with no antimicrobial activity. Does not permeate bacterial membranes. May act in synergy with cationic peptides by enhancing their activity. Has a moderate hemolytic activity. It interacts with zwitterionic phospholipids (DMPC) without perturbing either the interface or inside of the bilayer, whereas it causes little perturbations at the interface peptide-anionic vesicles (DMPG) as well as in the bilayer alkyl chains. The chain is Plasticin-DA1 from Agalychnis dacnicolor (Giant Mexican leaf frog).